The sequence spans 246 residues: Uridylate kinase (246 aa).

11 to 14 (KISG) contributes to the ATP binding site. G53 lines the UMP pocket. Residues G54 and R58 each contribute to the ATP site. UMP is bound by residues D74 and 135–142 (TGSPYLTT). ATP contacts are provided by T162, Y169, and D172.

The protein belongs to the UMP kinase family. In terms of assembly, homohexamer.

The protein localises to the cytoplasm. It catalyses the reaction UMP + ATP = UDP + ADP. It functions in the pathway pyrimidine metabolism; CTP biosynthesis via de novo pathway; UDP from UMP (UMPK route): step 1/1. With respect to regulation, inhibited by UTP. Its function is as follows. Catalyzes the reversible phosphorylation of UMP to UDP. The sequence is that of Uridylate kinase from Chlamydia abortus (strain DSM 27085 / S26/3) (Chlamydophila abortus).